The primary structure comprises 118 residues: Ribosome-binding factor A (118 aa).

It belongs to the RbfA family. Monomer. Binds 30S ribosomal subunits, but not 50S ribosomal subunits or 70S ribosomes.

It is found in the cytoplasm. In terms of biological role, one of several proteins that assist in the late maturation steps of the functional core of the 30S ribosomal subunit. Associates with free 30S ribosomal subunits (but not with 30S subunits that are part of 70S ribosomes or polysomes). Required for efficient processing of 16S rRNA. May interact with the 5'-terminal helix region of 16S rRNA. The protein is Ribosome-binding factor A of Latilactobacillus sakei subsp. sakei (strain 23K) (Lactobacillus sakei subsp. sakei).